Here is a 422-residue protein sequence, read N- to C-terminus: Histidinol dehydrogenase (422 aa).

Positions 123, 183, and 206 each coordinate NAD(+). Positions 229, 251, and 254 each coordinate substrate. Zn(2+) contacts are provided by Gln251 and His254. Catalysis depends on proton acceptor residues Glu320 and His321. His321, Asp354, Glu408, and His413 together coordinate substrate. Asp354 is a Zn(2+) binding site. His413 lines the Zn(2+) pocket.

The protein belongs to the histidinol dehydrogenase family. It depends on Zn(2+) as a cofactor.

It carries out the reaction L-histidinol + 2 NAD(+) + H2O = L-histidine + 2 NADH + 3 H(+). Its pathway is amino-acid biosynthesis; L-histidine biosynthesis; L-histidine from 5-phospho-alpha-D-ribose 1-diphosphate: step 9/9. Its function is as follows. Catalyzes the sequential NAD-dependent oxidations of L-histidinol to L-histidinaldehyde and then to L-histidine. The chain is Histidinol dehydrogenase from Haloarcula marismortui (strain ATCC 43049 / DSM 3752 / JCM 8966 / VKM B-1809) (Halobacterium marismortui).